Consider the following 201-residue polypeptide: uncharacterized protein (201 aa).

As to quaternary structure, interacts with the chaperones HSP82 and HSC82.

This is an uncharacterized protein from Saccharomyces cerevisiae (strain ATCC 204508 / S288c) (Baker's yeast).